A 228-amino-acid polypeptide reads, in one-letter code: Cytochrome c oxidase subunit 2 (228 aa).

At 1 to 26 (MTTWANMNLQDSASPIMEQLIYFHDH) the chain is on the mitochondrial intermembrane side. Residues 27–48 (ALMIIIMILMVVSYMMIAMVFN) form a helical membrane-spanning segment. Over 49–62 (KYINRFLLEGQMIE) the chain is Mitochondrial matrix. The chain crosses the membrane as a helical span at residues 63–82 (LAWTIAPAVILIFIAVPSLR). Topologically, residues 83–228 (LLYLMDEINT…FINWILKMNM (146 aa)) are mitochondrial intermembrane. Cu cation contacts are provided by histidine 161, cysteine 196, glutamate 198, cysteine 200, histidine 204, and methionine 207. Glutamate 198 contacts Mg(2+).

This sequence belongs to the cytochrome c oxidase subunit 2 family. In terms of assembly, component of the cytochrome c oxidase (complex IV, CIV), a multisubunit enzyme composed of a catalytic core of 3 subunits and several supernumerary subunits. The complex exists as a monomer or a dimer and forms supercomplexes (SCs) in the inner mitochondrial membrane with ubiquinol-cytochrome c oxidoreductase (cytochrome b-c1 complex, complex III, CIII). Requires Cu cation as cofactor.

Its subcellular location is the mitochondrion inner membrane. The enzyme catalyses 4 Fe(II)-[cytochrome c] + O2 + 8 H(+)(in) = 4 Fe(III)-[cytochrome c] + 2 H2O + 4 H(+)(out). Component of the cytochrome c oxidase, the last enzyme in the mitochondrial electron transport chain which drives oxidative phosphorylation. The respiratory chain contains 3 multisubunit complexes succinate dehydrogenase (complex II, CII), ubiquinol-cytochrome c oxidoreductase (cytochrome b-c1 complex, complex III, CIII) and cytochrome c oxidase (complex IV, CIV), that cooperate to transfer electrons derived from NADH and succinate to molecular oxygen, creating an electrochemical gradient over the inner membrane that drives transmembrane transport and the ATP synthase. Cytochrome c oxidase is the component of the respiratory chain that catalyzes the reduction of oxygen to water. Electrons originating from reduced cytochrome c in the intermembrane space (IMS) are transferred via the dinuclear copper A center (CU(A)) of subunit 2 and heme A of subunit 1 to the active site in subunit 1, a binuclear center (BNC) formed by heme A3 and copper B (CU(B)). The BNC reduces molecular oxygen to 2 water molecules using 4 electrons from cytochrome c in the IMS and 4 protons from the mitochondrial matrix. This chain is Cytochrome c oxidase subunit 2 (COII), found in Periplaneta americana (American cockroach).